The primary structure comprises 380 residues: Histidinol-phosphate aminotransferase (380 aa).

K232 is modified (N6-(pyridoxal phosphate)lysine).

Belongs to the class-II pyridoxal-phosphate-dependent aminotransferase family. Histidinol-phosphate aminotransferase subfamily. As to quaternary structure, homodimer. It depends on pyridoxal 5'-phosphate as a cofactor.

The enzyme catalyses L-histidinol phosphate + 2-oxoglutarate = 3-(imidazol-4-yl)-2-oxopropyl phosphate + L-glutamate. It functions in the pathway amino-acid biosynthesis; L-histidine biosynthesis; L-histidine from 5-phospho-alpha-D-ribose 1-diphosphate: step 7/9. The sequence is that of Histidinol-phosphate aminotransferase from Mycobacterium bovis (strain BCG / Pasteur 1173P2).